The chain runs to 206 residues: Large ribosomal subunit protein uL4 (206 aa).

The tract at residues 47 to 71 is disordered; sequence TRAQKGRSEVAGSTRKQWRQKGTGR.

It belongs to the universal ribosomal protein uL4 family. Part of the 50S ribosomal subunit.

Functionally, one of the primary rRNA binding proteins, this protein initially binds near the 5'-end of the 23S rRNA. It is important during the early stages of 50S assembly. It makes multiple contacts with different domains of the 23S rRNA in the assembled 50S subunit and ribosome. In terms of biological role, forms part of the polypeptide exit tunnel. This Nitrosomonas eutropha (strain DSM 101675 / C91 / Nm57) protein is Large ribosomal subunit protein uL4.